A 367-amino-acid polypeptide reads, in one-letter code: Ganglioside-induced differentiation-associated protein 1-like 1 (367 aa).

The GST N-terminal domain maps to Glu45–His126. The GST C-terminal domain occupies Pro174 to Phe341.

This sequence belongs to the GST superfamily.

The chain is Ganglioside-induced differentiation-associated protein 1-like 1 (GDAP1L1) from Homo sapiens (Human).